The following is a 585-amino-acid chain: Protein NRT1/ PTR FAMILY 8.3 (585 aa).

N-acetylglycine is present on G2. The chain crosses the membrane as a helical span at residues 91–111 (WQGTCYLTPLIGAVLADAYWG). T115 is modified (phosphothreonine). Helical transmembrane passes span 116–136 (IACF…SASV), 154–174 (PAQY…TGGI), 200–220 (FFNW…SLLV), 228–248 (WGLG…SFFF), 351–371 (FPIW…STMF), 387–407 (LPPA…VPLY), 431–451 (MGIG…VEII), 472–492 (VLWQ…YFIG), 511–531 (ALAL…LTLV), and 556–576 (FFWL…FSAA).

The protein belongs to the major facilitator superfamily. Proton-dependent oligopeptide transporter (POT/PTR) (TC 2.A.17) family. Highly expressed in young leaves, roots and germinating seeds, intermediately in stems, flowers and mature leaves and at low level in siliques.

The protein resides in the vacuole membrane. Inhibited by leucyl-ethionine. Peptide transporter. Mediates the transport of di- and tripeptides. High affinity, low capacity transporter. Can also transport histidine. This Arabidopsis thaliana (Mouse-ear cress) protein is Protein NRT1/ PTR FAMILY 8.3 (NPF8.3).